A 370-amino-acid polypeptide reads, in one-letter code: 3-isopropylmalate dehydrogenase (370 aa).

77–90 (GPKWDSVPYEVRPE) is an NAD(+) binding site. Substrate is bound by residues arginine 97, arginine 107, arginine 135, and aspartate 226. Mg(2+) is bound by residues aspartate 226, aspartate 250, and aspartate 254. Residue 290 to 302 (GSAPDIAGKGIAN) coordinates NAD(+).

Belongs to the isocitrate and isopropylmalate dehydrogenases family. LeuB type 1 subfamily. Homodimer. Mg(2+) serves as cofactor. The cofactor is Mn(2+).

The protein resides in the cytoplasm. It carries out the reaction (2R,3S)-3-isopropylmalate + NAD(+) = 4-methyl-2-oxopentanoate + CO2 + NADH. It functions in the pathway amino-acid biosynthesis; L-leucine biosynthesis; L-leucine from 3-methyl-2-oxobutanoate: step 3/4. In terms of biological role, catalyzes the oxidation of 3-carboxy-2-hydroxy-4-methylpentanoate (3-isopropylmalate) to 3-carboxy-4-methyl-2-oxopentanoate. The product decarboxylates to 4-methyl-2 oxopentanoate. The protein is 3-isopropylmalate dehydrogenase of Brucella abortus (strain 2308).